The following is a 459-amino-acid chain: Periodic tryptophan protein 1 homolog (459 aa).

A disordered region spans residues 44–84; it reads GDTQQELDEESDDDAEEGENAEEDQNDMDVDDHADANSENR. Residues 48-73 show a composition bias toward acidic residues; the sequence is QELDEESDDDAEEGENAEEDQNDMDV. Residues 74–84 are compositionally biased toward basic and acidic residues; sequence DDHADANSENR. WD repeat units follow at residues 168 to 214, 232 to 272, 275 to 315, 321 to 361, and 365 to 405; these read LLPS…AIEP, GHKD…PHTT, AFGK…GVNS, KVDG…QLLW, and AHNE…AKHV. At S385 the chain carries Phosphoserine.

The protein belongs to the WD repeat PWP1 family. As to quaternary structure, interacts with Mybbp1A. Post-translationally, phosphorylated in response to nutrient-activated TORC1 signaling. In terms of tissue distribution, detected in the germline of adult testis and ovary (at protein level). Detected in ovary somatic cells, in zfh1-positive cyst cells in the testis and absent in differentiated cyst cells (at protein level).

It is found in the nucleus. Its subcellular location is the nucleolus. The protein resides in the chromosome. The protein localises to the nucleoplasm. Chromatin-associated factor that regulates transcription. Regulates Pol I-mediated rRNA biogenesis and, probably, Pol III-mediated transcription. Regulates the localization to the nucleolus of Cdk7, a regulator of the Pol I-elongation factor TFIIH. Acts as a regulator of cell proliferation and tissue growth as part of the TORC1 and Myc signaling pathway in response to nutrients. Required in males for both germline stem cell (GSC) maintenance and early stages of germ cell differentiation of germ cell cysts. Not required for female germline stem cell (GSC) maintenance, but necessary to regulate germ cell differentiation and egg chamber development. In female somatic cells, required for follicle stem cell survival and maintenance. The protein is Periodic tryptophan protein 1 homolog of Drosophila melanogaster (Fruit fly).